Here is a 383-residue protein sequence, read N- to C-terminus: Putative dehydratase subunit YjiM (383 aa).

Belongs to the FldB/FldC dehydratase alpha/beta subunit family.

The chain is Putative dehydratase subunit YjiM (yjiM) from Escherichia coli (strain K12).